Consider the following 631-residue polypeptide: Sperm-associated antigen 16 protein (631 aa).

A coiled-coil region spans residues Asp-152–Arg-267. Residues Gln-266–Lys-332 form a disordered region. Composition is skewed to basic and acidic residues over residues Lys-277–Ala-287 and Gly-295–Lys-304. WD repeat units lie at residues Leu-350 to Thr-389, Gly-392 to Thr-431, Gly-434 to Thr-473, Gly-476 to Ser-515, Gly-518 to Ser-557, Ile-560 to Met-600, and Gly-601 to Trp-630.

As to quaternary structure, interacts with SPAG6 and STK36. Post-translationally, phosphorylated by TSSK2. In terms of tissue distribution, isoform 1 is detected in testis. Isoform 4 is detected in testis and brain, and at lower levels in kidney, heart, pancreas, thyroid, ovary, adrenal gland, spinal cord, trachea and liver.

The protein resides in the cytoplasm. The protein localises to the cytoskeleton. It localises to the flagellum axoneme. It is found in the cilium axoneme. Its subcellular location is the cell projection. The protein resides in the cilium. The protein localises to the flagellum. Necessary for sperm flagellar function. Plays a role in motile ciliogenesis. May help to recruit STK36 to the cilium or apical surface of the cell to initiate subsequent steps of construction of the central pair apparatus of motile cilia. In Homo sapiens (Human), this protein is Sperm-associated antigen 16 protein (SPAG16).